The primary structure comprises 129 residues: Small ribosomal subunit protein uS11 (129 aa).

It belongs to the universal ribosomal protein uS11 family. Part of the 30S ribosomal subunit. Interacts with proteins S7 and S18. Binds to IF-3.

In terms of biological role, located on the platform of the 30S subunit, it bridges several disparate RNA helices of the 16S rRNA. Forms part of the Shine-Dalgarno cleft in the 70S ribosome. This Azobacteroides pseudotrichonymphae genomovar. CFP2 protein is Small ribosomal subunit protein uS11.